A 484-amino-acid chain; its full sequence is MPGTSVSDLSTATAVDAPALLPLPVARPSAPAVVRGKLYIKTHGCQMNEYDSAKMADVLAASEGLELTDNPEEADVVLVNTCSIREKAQEKVFSQLGRWKALKAGGKPVIIGVGGCVASQEGEAIVKRAPYVDLVFGPQTLHRLPELIRARRESGKSQVDISFPEIEKFDRLPEPRAEGPSAFVSIMEGCSKYCSFCVVPYTRGEEVSRPFEDVLVEVAQLAAQGVREINLLGQNVNAYRGAYGADAGDPAQYADLGLLIRTIAQIEGIGRIRFTTSHPLEFSDSLVDAYRDVPQLANCLHLPVQAGSDRILSAMKRGYTALEFKSRIRKLRAVRPDISISSDFIVGFPGETEADFEKTMKLIEDVGFDQSFSFVYSRRPGTPASDLQDDTPETVKQARLARLQAHISAHAASISQSMVGSVQRVLVEGPSRRDPNELTGKSENMRPVNFPGNPRLIGQFVDVLITEAMSNSLRGRIQLDDSAH.

The MTTase N-terminal domain maps to 36–153; sequence GKLYIKTHGC…LPELIRARRE (118 aa). [4Fe-4S] cluster contacts are provided by Cys45, Cys82, Cys116, Cys190, Cys194, and Cys197. In terms of domain architecture, Radical SAM core spans 176-415; it reads RAEGPSAFVS…HISAHAASIS (240 aa). In terms of domain architecture, TRAM spans 416–479; the sequence is QSMVGSVQRV…SNSLRGRIQL (64 aa). The disordered stretch occupies residues 428 to 450; that stretch reads EGPSRRDPNELTGKSENMRPVNF.

It belongs to the methylthiotransferase family. MiaB subfamily. Monomer. Requires [4Fe-4S] cluster as cofactor.

Its subcellular location is the cytoplasm. The catalysed reaction is N(6)-dimethylallyladenosine(37) in tRNA + (sulfur carrier)-SH + AH2 + 2 S-adenosyl-L-methionine = 2-methylsulfanyl-N(6)-dimethylallyladenosine(37) in tRNA + (sulfur carrier)-H + 5'-deoxyadenosine + L-methionine + A + S-adenosyl-L-homocysteine + 2 H(+). Its function is as follows. Catalyzes the methylthiolation of N6-(dimethylallyl)adenosine (i(6)A), leading to the formation of 2-methylthio-N6-(dimethylallyl)adenosine (ms(2)i(6)A) at position 37 in tRNAs that read codons beginning with uridine. This chain is tRNA-2-methylthio-N(6)-dimethylallyladenosine synthase, found in Xanthomonas oryzae pv. oryzae (strain PXO99A).